Consider the following 143-residue polypeptide: NADH-quinone oxidoreductase subunit A (143 aa).

3 helical membrane-spanning segments follow: residues 12-32 (YIVGSVFLCVFMLLCGYFLGG), 61-81 (FYLIAMIFVIFDVEGIYLYIW), and 90-110 (WIGFIEVCIFVFILLISLIYA).

This sequence belongs to the complex I subunit 3 family. As to quaternary structure, NDH-1 is composed of 13 different subunits. Subunits NuoA, H, J, K, L, M, N constitute the membrane sector of the complex.

The protein resides in the cell inner membrane. It catalyses the reaction a quinone + NADH + 5 H(+)(in) = a quinol + NAD(+) + 4 H(+)(out). NDH-1 shuttles electrons from NADH, via FMN and iron-sulfur (Fe-S) centers, to quinones in the respiratory chain. The immediate electron acceptor for the enzyme in this species is believed to be ubiquinone. Couples the redox reaction to proton translocation (for every two electrons transferred, four hydrogen ions are translocated across the cytoplasmic membrane), and thus conserves the redox energy in a proton gradient. In Blochmanniella floridana, this protein is NADH-quinone oxidoreductase subunit A.